The following is a 222-amino-acid chain: Putative adhesin RP828 (222 aa).

A signal peptide spans 1 to 22 (MKKLLLIATASATILSSSVSFA).

Its function is as follows. Adheres to biotinylated epithelial (Vero cell) proteins. This is Putative adhesin RP828 from Rickettsia prowazekii (strain Madrid E).